The primary structure comprises 381 residues: DNA dC-&gt;dU-editing enzyme APOBEC-3G (381 aa).

Positions 1 to 62 (MKPQTRNTVV…ANIFQGQVSF (62 aa)) are essential for cytoplasmic localization. CMP/dCMP-type deaminase domains are found at residues 29–143 (HRNT…SQTG) and 211–325 (GQHQ…LRRL). A Phosphothreonine; by PKA modification is found at Thr32. His67, Cys98, and Cys101 together coordinate Zn(2+). A necessary for homooligomerization region spans residues 206 to 333 (DPSVLGQHQS…RLDRAGTPIS (128 aa)). The interaction with DNA stretch occupies residues 210 to 212 (LGQ). His254 provides a ligand contact to Zn(2+). The active-site Proton donor is the Glu256. Zn(2+) contacts are provided by Cys285 and Cys288. Positions 310–317 (RIYDYQRG) are interaction with DNA.

It belongs to the cytidine and deoxycytidylate deaminase family. In terms of assembly, homodimer. Homooligomer. Can bind RNA to form ribonucleoprotein complexes of high-molecular-mass (HMM) or low-molecular-mass (LMM). HMM is inactive and heterogeneous in protein composition because of binding nonselectively to cellular RNAs, which in turn are associated with variety of cellular proteins. The LMM form which is enzymatically active has few or no RNAs associated. Its ability to form homooligomer is distinct from its ability to assemble into HMM. Interacts with APOBEC3B, APOBEC3F, MOV10, AGO2, EIF4E, EIF4ENIF1, DCP2 and DDX6 in an RNA-dependent manner. Interacts with AGO1, AGO3 and PKA/PRKACA. The cofactor is Zn(2+).

Its subcellular location is the cytoplasm. It localises to the nucleus. The protein resides in the P-body. The catalysed reaction is a 2'-deoxycytidine in single-stranded DNA + H2O + H(+) = a 2'-deoxyuridine in single-stranded DNA + NH4(+). Its function is as follows. DNA deaminase (cytidine deaminase) which acts as an inhibitor of retrovirus replication and retrotransposon mobility. After the penetration of retroviral nucleocapsids into target cells of infection and the initiation of reverse transcription, it can induce the conversion of cytosine to uracil in the minus-sense single-strand viral DNA, leading to G-to-A hypermutations in the subsequent plus-strand viral DNA. The resultant detrimental levels of mutations in the proviral genome, along with a deamination-independent mechanism that works prior to the proviral integration, together exert efficient antiretroviral effects in infected target cells. Selectively targets single-stranded DNA and does not deaminate double-stranded DNA or single- or double-stranded RNA. The polypeptide is DNA dC-&gt;dU-editing enzyme APOBEC-3G (APOBEC3G) (Lagothrix lagotricha (Brown woolly monkey)).